Consider the following 92-residue polypeptide: Muconolactone Delta-isomerase (92 aa).

The protein belongs to the muconolactone Delta-isomerase family. As to quaternary structure, homodecamer.

It carries out the reaction (S)-muconolactone = (4,5-dihydro-5-oxofuran-2-yl)-acetate. The protein operates within aromatic compound metabolism; beta-ketoadipate pathway; 5-oxo-4,5-dihydro-2-furylacetate from catechol: step 3/3. This is Muconolactone Delta-isomerase (catC) from Cupriavidus pinatubonensis (strain JMP 134 / LMG 1197) (Cupriavidus necator (strain JMP 134)).